Consider the following 340-residue polypeptide: DNA-directed RNA polymerase subunit alpha (340 aa).

Residues 1-236 are alpha N-terminal domain (alpha-NTD); that stretch reads MLSLSKNWNT…EQLQLFISFE (236 aa). Positions 251–340 are alpha C-terminal domain (alpha-CTD); the sequence is FSPYLLKRVD…LSKRYEDSYN (90 aa).

Belongs to the RNA polymerase alpha chain family. As to quaternary structure, homodimer. The RNAP catalytic core consists of 2 alpha, 1 beta, 1 beta' and 1 omega subunit. When a sigma factor is associated with the core the holoenzyme is formed, which can initiate transcription.

The catalysed reaction is RNA(n) + a ribonucleoside 5'-triphosphate = RNA(n+1) + diphosphate. Functionally, DNA-dependent RNA polymerase catalyzes the transcription of DNA into RNA using the four ribonucleoside triphosphates as substrates. This is DNA-directed RNA polymerase subunit alpha from Rickettsia africae (strain ESF-5).